Reading from the N-terminus, the 250-residue chain is Small ribosomal subunit protein uS2 (250 aa).

Belongs to the universal ribosomal protein uS2 family.

This is Small ribosomal subunit protein uS2 from Delftia acidovorans (strain DSM 14801 / SPH-1).